The chain runs to 259 residues: uncharacterized protein (259 aa).

The region spanning 19-249 is the Radical SAM core domain; it reads TKIPGAKYVI…DEVINTIKKK (231 aa). The [4Fe-4S] cluster site is built by cysteine 34, cysteine 38, and cysteine 41.

[4Fe-4S] cluster is required as a cofactor.

This is an uncharacterized protein from Methanocaldococcus jannaschii (strain ATCC 43067 / DSM 2661 / JAL-1 / JCM 10045 / NBRC 100440) (Methanococcus jannaschii).